A 199-amino-acid polypeptide reads, in one-letter code: Glycerol-3-phosphate acyltransferase (199 aa).

Transmembrane regions (helical) follow at residues 4–24 (FALFYMLFAYLLGSISSAILI), 56–76 (LAVLIFDMLKGMIPVWAGYYL), 80–100 (QFELGMVALGACLGHIFPIFF), 115–135 (IAPISWAVAGSMFGTWIFVFL), and 154–176 (YVWWFKPEFTFPVALVCCLLIYR).

The protein belongs to the PlsY family. In terms of assembly, probably interacts with PlsX.

Its subcellular location is the cell inner membrane. It carries out the reaction an acyl phosphate + sn-glycerol 3-phosphate = a 1-acyl-sn-glycero-3-phosphate + phosphate. It participates in lipid metabolism; phospholipid metabolism. Its function is as follows. Catalyzes the transfer of an acyl group from acyl-phosphate (acyl-PO(4)) to glycerol-3-phosphate (G3P) to form lysophosphatidic acid (LPA). This enzyme utilizes acyl-phosphate as fatty acyl donor, but not acyl-CoA or acyl-ACP. This chain is Glycerol-3-phosphate acyltransferase, found in Haemophilus influenzae (strain PittGG).